Consider the following 901-residue polypeptide: Protein translocase subunit SecA (901 aa).

Residues Gln87, 105 to 109, and Asp512 each bind ATP; that span reads GEGKT. Residues 839-901 form a disordered region; the sequence is QMEEQRRQES…KYKQCHGRLA (63 aa). Basic and acidic residues predominate over residues 841-850; that stretch reads EEQRRQESER. Cys885, Cys887, Cys896, and His897 together coordinate Zn(2+). Over residues 891-901 the composition is skewed to basic residues; that stretch reads KKYKQCHGRLA.

This sequence belongs to the SecA family. As to quaternary structure, monomer and homodimer. Part of the essential Sec protein translocation apparatus which comprises SecA, SecYEG and auxiliary proteins SecDF-YajC and YidC. It depends on Zn(2+) as a cofactor.

Its subcellular location is the cell inner membrane. The protein localises to the cytoplasm. The catalysed reaction is ATP + H2O + cellular proteinSide 1 = ADP + phosphate + cellular proteinSide 2.. In terms of biological role, part of the Sec protein translocase complex. Interacts with the SecYEG preprotein conducting channel. Has a central role in coupling the hydrolysis of ATP to the transfer of proteins into and across the cell membrane, serving both as a receptor for the preprotein-SecB complex and as an ATP-driven molecular motor driving the stepwise translocation of polypeptide chains across the membrane. The polypeptide is Protein translocase subunit SecA (Erwinia tasmaniensis (strain DSM 17950 / CFBP 7177 / CIP 109463 / NCPPB 4357 / Et1/99)).